A 529-amino-acid polypeptide reads, in one-letter code: Listeriolysin O (529 aa).

Residues 1–24 form the signal peptide; the sequence is MKKIMLVFITLILISLPIAQQTEA. Residues 35 to 54 form a disordered region; that stretch reads SISSMAPPASPPASPKTPIE. A run of 4 beta stranded transmembrane segments spans residues 214-227, 234-243, 312-321, and 329-341; these read ESQLIAKFGTAFKA, VNFGAISEGK, STKVKAAFDA, and SGDVELTNIIKNS. The Conserved undecapeptide motif lies at 483–493; it reads ECTGLAWEWWR. Positions 515–516 match the Cholesterol binding motif; that stretch reads TL.

It belongs to the cholesterol-dependent cytolysin family. As to quaternary structure, homooligomeric pore complex of 35 to 50 subunits; when inserted in the host membrane.

The protein localises to the secreted. It is found in the host membrane. The protein resides in the host cell membrane. Activity of listeriolysin O is regulated on multiple levels. It should be high in the phagosome, thereby allowing escape of the bacteria from the phagosomal compartment. Then, once inside the host cytosol, the activity must be controlled to prevent lysis of the host plasma membrane and loss of the intracellular environment. A cholesterol-dependent toxin that causes cytolysis by forming pores in cholesterol containing host membranes. After binding to target membranes, the protein undergoes a major conformation change, leading to its insertion in the host membrane and formation of an oligomeric pore complex. Cholesterol is required for binding to host membranes, membrane insertion and pore formation; cholesterol binding is mediated by a Thr-Leu pair in the C-terminus. Acts as a major virulence factor required for the escape of bacteria from phagosomal vacuoles and entry into the host cytosol. Can be reversibly inactivated by oxidation. This is Listeriolysin O (hly) from Listeria monocytogenes serotype 4a (strain HCC23).